Reading from the N-terminus, the 622-residue chain is 1-deoxy-D-xylulose-5-phosphate synthase (622 aa).

Thiamine diphosphate contacts are provided by residues His-80 and 121 to 123 (GHS). Residue Asp-152 participates in Mg(2+) binding. Thiamine diphosphate contacts are provided by residues 153-154 (GA), Asn-181, Tyr-288, and Glu-370. Asn-181 provides a ligand contact to Mg(2+).

The protein belongs to the transketolase family. DXPS subfamily. As to quaternary structure, homodimer. Mg(2+) is required as a cofactor. Requires thiamine diphosphate as cofactor.

The catalysed reaction is D-glyceraldehyde 3-phosphate + pyruvate + H(+) = 1-deoxy-D-xylulose 5-phosphate + CO2. The protein operates within metabolic intermediate biosynthesis; 1-deoxy-D-xylulose 5-phosphate biosynthesis; 1-deoxy-D-xylulose 5-phosphate from D-glyceraldehyde 3-phosphate and pyruvate: step 1/1. In terms of biological role, catalyzes the acyloin condensation reaction between C atoms 2 and 3 of pyruvate and glyceraldehyde 3-phosphate to yield 1-deoxy-D-xylulose-5-phosphate (DXP). The polypeptide is 1-deoxy-D-xylulose-5-phosphate synthase (Hamiltonella defensa subsp. Acyrthosiphon pisum (strain 5AT)).